The primary structure comprises 554 residues: Glucose-6-phosphate isomerase (554 aa).

The active-site Proton donor is the glutamate 359. Active-site residues include histidine 390 and lysine 518.

It belongs to the GPI family.

The protein localises to the cytoplasm. It carries out the reaction alpha-D-glucose 6-phosphate = beta-D-fructose 6-phosphate. The protein operates within carbohydrate biosynthesis; gluconeogenesis. Its pathway is carbohydrate degradation; glycolysis; D-glyceraldehyde 3-phosphate and glycerone phosphate from D-glucose: step 2/4. Its function is as follows. Catalyzes the reversible isomerization of glucose-6-phosphate to fructose-6-phosphate. This Ectopseudomonas mendocina (strain ymp) (Pseudomonas mendocina) protein is Glucose-6-phosphate isomerase.